The chain runs to 273 residues: Kit ligand (273 aa).

Residues 1 to 25 (MKKTQTWIITCIYLQLLLFNPLVKT) form the signal peptide. At 26–214 (KEICGNPVTD…AKAPEDSGLQ (189 aa)) the chain is on the extracellular side. 2 cysteine pairs are disulfide-bonded: C29/C114 and C68/C163. N90, N97, N145, and N195 each carry an N-linked (GlcNAc...) asparagine glycan. The disordered stretch occupies residues 190-210 (ASSLRNDSSSSNRKAAKAPED). Over residues 191–202 (SSLRNDSSSSNR) the composition is skewed to low complexity. A helical transmembrane segment spans residues 215–237 (WTAMALPALISLVIGFAFGALYW). Residues 238-273 (KKKQSSLTRAVENIQINEEDNEISMLQQKEREFQEV) lie on the Cytoplasmic side of the membrane.

It belongs to the SCF family. Homodimer, non-covalently linked. Heterotetramer with KIT, binding two KIT molecules; thereby mediates KIT dimerization and subsequent activation by autophosphorylation. In terms of processing, a soluble form is produced by proteolytic processing of isoform 1 in the extracellular domain. Expressed in the cochlea.

It localises to the cell membrane. The protein resides in the cytoplasm. It is found in the cytoskeleton. The protein localises to the cell projection. Its subcellular location is the lamellipodium. It localises to the filopodium. The protein resides in the secreted. Its function is as follows. Ligand for the receptor-type protein-tyrosine kinase KIT. Plays an essential role in the regulation of cell survival and proliferation, hematopoiesis, stem cell maintenance, gametogenesis, mast cell development, migration and function, and in melanogenesis. KITLG/SCF binding can activate several signaling pathways. Promotes phosphorylation of PIK3R1, the regulatory subunit of phosphatidylinositol 3-kinase, and subsequent activation of the kinase AKT1. KITLG/SCF and KIT also transmit signals via GRB2 and activation of RAS, RAF1 and the MAP kinases MAPK1/ERK2 and/or MAPK3/ERK1. KITLG/SCF and KIT promote activation of STAT family members STAT1, STAT3 and STAT5. KITLG/SCF and KIT promote activation of PLCG1, leading to the production of the cellular signaling molecules diacylglycerol and inositol 1,4,5-trisphosphate. KITLG/SCF acts synergistically with other cytokines, probably interleukins. The polypeptide is Kit ligand (Kitlg) (Mus musculus (Mouse)).